Consider the following 181-residue polypeptide: Adenylate kinase (181 aa).

Position 10 to 15 (10 to 15) interacts with ATP; sequence GAGKGT. The NMP stretch occupies residues 30-59; that stretch reads STGDLFRANISQGTELGKQAQEYMDAGKLV. AMP-binding positions include Thr31, Arg36, 57 to 59, 85 to 88, and Gln92; these read KLV and GFPR. Positions 126-132 are LID; it reads SRGRNDD. Arg127 serves as a coordination point for ATP. Arg129 and Arg140 together coordinate AMP. ATP is bound at residue Gly166.

This sequence belongs to the adenylate kinase family. As to quaternary structure, monomer.

Its subcellular location is the cytoplasm. It carries out the reaction AMP + ATP = 2 ADP. The protein operates within purine metabolism; AMP biosynthesis via salvage pathway; AMP from ADP: step 1/1. Functionally, catalyzes the reversible transfer of the terminal phosphate group between ATP and AMP. Plays an important role in cellular energy homeostasis and in adenine nucleotide metabolism. The polypeptide is Adenylate kinase (Corynebacterium urealyticum (strain ATCC 43042 / DSM 7109)).